The following is a 325-amino-acid chain: Methionyl-tRNA formyltransferase (325 aa).

111-114 (SILP) is a binding site for (6S)-5,6,7,8-tetrahydrofolate.

It belongs to the Fmt family.

The enzyme catalyses L-methionyl-tRNA(fMet) + (6R)-10-formyltetrahydrofolate = N-formyl-L-methionyl-tRNA(fMet) + (6S)-5,6,7,8-tetrahydrofolate + H(+). Its function is as follows. Attaches a formyl group to the free amino group of methionyl-tRNA(fMet). The formyl group appears to play a dual role in the initiator identity of N-formylmethionyl-tRNA by promoting its recognition by IF2 and preventing the misappropriation of this tRNA by the elongation apparatus. This Microcystis aeruginosa (strain NIES-843 / IAM M-2473) protein is Methionyl-tRNA formyltransferase.